A 690-amino-acid chain; its full sequence is Glutaminase A (690 aa).

The first 20 residues, 1-20 (MMHFLSFCLSVASLVSYAGA), serve as a signal peptide directing secretion. N-linked (GlcNAc...) asparagine glycosylation is found at Asn-80, Asn-96, Asn-435, Asn-508, Asn-528, Asn-538, and Asn-571.

This sequence belongs to the fungal glutaminase gtaA family.

The protein localises to the secreted. It carries out the reaction L-glutamine + H2O = L-glutamate + NH4(+). With respect to regulation, activity is inhibited by about 80% in the presence of 18% sodium chloride. Glutaminase catalyzes the hydrolysis of glutamine to glutamic acid and plays a key role in nitrogen metabolism. Catalyzes the hydrolysis not only of L-glutamine but also of D-glutamine. In Aspergillus oryzae (strain ATCC 42149 / RIB 40) (Yellow koji mold), this protein is Glutaminase A.